Here is a 180-residue protein sequence, read N- to C-terminus: Adenine phosphoribosyltransferase (180 aa).

The protein belongs to the purine/pyrimidine phosphoribosyltransferase family. Homodimer.

Its subcellular location is the cytoplasm. It catalyses the reaction AMP + diphosphate = 5-phospho-alpha-D-ribose 1-diphosphate + adenine. Its pathway is purine metabolism; AMP biosynthesis via salvage pathway; AMP from adenine: step 1/1. In terms of biological role, catalyzes a salvage reaction resulting in the formation of AMP, that is energically less costly than de novo synthesis. The sequence is that of Adenine phosphoribosyltransferase from Haemophilus influenzae (strain 86-028NP).